Reading from the N-terminus, the 223-residue chain is 2-C-methyl-D-erythritol 4-phosphate cytidylyltransferase (223 aa).

It belongs to the IspD/TarI cytidylyltransferase family. IspD subfamily.

It catalyses the reaction 2-C-methyl-D-erythritol 4-phosphate + CTP + H(+) = 4-CDP-2-C-methyl-D-erythritol + diphosphate. The protein operates within isoprenoid biosynthesis; isopentenyl diphosphate biosynthesis via DXP pathway; isopentenyl diphosphate from 1-deoxy-D-xylulose 5-phosphate: step 2/6. Its function is as follows. Catalyzes the formation of 4-diphosphocytidyl-2-C-methyl-D-erythritol from CTP and 2-C-methyl-D-erythritol 4-phosphate (MEP). This Prochlorococcus marinus (strain MIT 9215) protein is 2-C-methyl-D-erythritol 4-phosphate cytidylyltransferase.